The primary structure comprises 454 residues: Asparagine--tRNA ligase (454 aa).

Belongs to the class-II aminoacyl-tRNA synthetase family. As to quaternary structure, homodimer.

The protein localises to the cytoplasm. It catalyses the reaction tRNA(Asn) + L-asparagine + ATP = L-asparaginyl-tRNA(Asn) + AMP + diphosphate + H(+). The polypeptide is Asparagine--tRNA ligase (Mycoplasma capricolum subsp. capricolum (strain California kid / ATCC 27343 / NCTC 10154)).